Here is a 486-residue protein sequence, read N- to C-terminus: Transcriptional adapter 2-beta (486 aa).

The segment at 4–59 (LGKKYCVNCLADVTNLRIRCAECQDIELCPECFSAGAEIGNHRRWHGYQQVDGGRF) adopts a ZZ-type zinc-finger fold. Zn(2+) is bound by residues cysteine 9, cysteine 12, cysteine 23, cysteine 26, cysteine 32, cysteine 35, histidine 45, and histidine 49. One can recognise an SANT domain in the interval 65 to 118 (EAEGGWTSREEQSLLDAIEQYGFGNWEDMAAHVGASRTPQEVMDHYVSMYIHGN). Disordered stretches follow at residues 237–291 (KKDK…EKGQ) and 343–377 (EYEA…TAGL). Gly residues-rich tracts occupy residues 247–262 (GTVG…GSGS) and 367–377 (SSGGGGGTAGL).

The protein resides in the nucleus. Its function is as follows. Transcriptional coactivator. This Danio rerio (Zebrafish) protein is Transcriptional adapter 2-beta (tada2b).